A 480-amino-acid polypeptide reads, in one-letter code: Coronin-2B (480 aa).

WD repeat units lie at residues 29 to 77 (HCFD…GRIE), 78 to 127 (PNYP…RNMT), 128 to 170 (EALL…LDVG), 171 to 212 (EPVK…PRSG), 213 to 259 (RVLQ…EDLS), 260 to 305 (MPLI…TEKP), and 306 to 345 (YLSY…KLVT). Residues 436–479 (NELLRMFFRQQDEIRRLKEELAQKDIRIRQLQLELKNLRNSPKN) adopt a coiled-coil conformation.

Belongs to the WD repeat coronin family. As to quaternary structure, binds to F-actin and to vinculin. Expressed predominantly in brain.

It is found in the cytoplasm. Its subcellular location is the cytoskeleton. May play a role in the reorganization of neuronal actin structure. In Homo sapiens (Human), this protein is Coronin-2B (CORO2B).